A 435-amino-acid chain; its full sequence is ATP-dependent protease ATPase subunit HslU (435 aa).

Residues isoleucine 18, 60–65, aspartate 248, glutamate 313, and arginine 385 each bind ATP; that span reads GVGKTE.

The protein belongs to the ClpX chaperone family. HslU subfamily. In terms of assembly, a double ring-shaped homohexamer of HslV is capped on each side by a ring-shaped HslU homohexamer. The assembly of the HslU/HslV complex is dependent on binding of ATP.

Its subcellular location is the cytoplasm. Functionally, ATPase subunit of a proteasome-like degradation complex; this subunit has chaperone activity. The binding of ATP and its subsequent hydrolysis by HslU are essential for unfolding of protein substrates subsequently hydrolyzed by HslV. HslU recognizes the N-terminal part of its protein substrates and unfolds these before they are guided to HslV for hydrolysis. In Roseobacter denitrificans (strain ATCC 33942 / OCh 114) (Erythrobacter sp. (strain OCh 114)), this protein is ATP-dependent protease ATPase subunit HslU.